The chain runs to 192 residues: 7-methyl-GTP pyrophosphatase (192 aa).

Residue Asp-69 is the Proton acceptor of the active site.

This sequence belongs to the Maf family. YceF subfamily. A divalent metal cation serves as cofactor.

The protein resides in the cytoplasm. It carries out the reaction N(7)-methyl-GTP + H2O = N(7)-methyl-GMP + diphosphate + H(+). Its function is as follows. Nucleoside triphosphate pyrophosphatase that hydrolyzes 7-methyl-GTP (m(7)GTP). May have a dual role in cell division arrest and in preventing the incorporation of modified nucleotides into cellular nucleic acids. The sequence is that of 7-methyl-GTP pyrophosphatase from Pseudomonas fluorescens (strain ATCC BAA-477 / NRRL B-23932 / Pf-5).